The chain runs to 334 residues: Holliday junction branch migration complex subunit RuvB (334 aa).

The tract at residues 4–184 (ADRLISAGVI…FGIVQRLEFY (181 aa)) is large ATPase domain (RuvB-L). ATP contacts are provided by residues Ile-23, Arg-24, Gly-65, Lys-68, Thr-69, Thr-70, 131–133 (EDY), Arg-174, Tyr-184, and Arg-221. Residue Thr-69 coordinates Mg(2+). The segment at 185-255 (QVADLEHIVS…VAMKALDMLN (71 aa)) is small ATPAse domain (RuvB-S). The tract at residues 258-334 (AEGFDFMDRK…YKHFGITREE (77 aa)) is head domain (RuvB-H). Residues Arg-294, Arg-313, and Arg-318 each contribute to the DNA site.

This sequence belongs to the RuvB family. As to quaternary structure, homohexamer. Forms an RuvA(8)-RuvB(12)-Holliday junction (HJ) complex. HJ DNA is sandwiched between 2 RuvA tetramers; dsDNA enters through RuvA and exits via RuvB. An RuvB hexamer assembles on each DNA strand where it exits the tetramer. Each RuvB hexamer is contacted by two RuvA subunits (via domain III) on 2 adjacent RuvB subunits; this complex drives branch migration. In the full resolvosome a probable DNA-RuvA(4)-RuvB(12)-RuvC(2) complex forms which resolves the HJ.

Its subcellular location is the cytoplasm. It carries out the reaction ATP + H2O = ADP + phosphate + H(+). In terms of biological role, the RuvA-RuvB-RuvC complex processes Holliday junction (HJ) DNA during genetic recombination and DNA repair, while the RuvA-RuvB complex plays an important role in the rescue of blocked DNA replication forks via replication fork reversal (RFR). RuvA specifically binds to HJ cruciform DNA, conferring on it an open structure. The RuvB hexamer acts as an ATP-dependent pump, pulling dsDNA into and through the RuvAB complex. RuvB forms 2 homohexamers on either side of HJ DNA bound by 1 or 2 RuvA tetramers; 4 subunits per hexamer contact DNA at a time. Coordinated motions by a converter formed by DNA-disengaged RuvB subunits stimulates ATP hydrolysis and nucleotide exchange. Immobilization of the converter enables RuvB to convert the ATP-contained energy into a lever motion, pulling 2 nucleotides of DNA out of the RuvA tetramer per ATP hydrolyzed, thus driving DNA branch migration. The RuvB motors rotate together with the DNA substrate, which together with the progressing nucleotide cycle form the mechanistic basis for DNA recombination by continuous HJ branch migration. Branch migration allows RuvC to scan DNA until it finds its consensus sequence, where it cleaves and resolves cruciform DNA. The polypeptide is Holliday junction branch migration complex subunit RuvB (Yersinia enterocolitica serotype O:8 / biotype 1B (strain NCTC 13174 / 8081)).